A 329-amino-acid polypeptide reads, in one-letter code: (+)-eremophilene synthase (329 aa).

Asp-91 and Glu-96 together coordinate Mg(2+). The DDXXD motif motif lies at 91–95 (DDAYD). Substrate is bound at residue Arg-185. Asn-231 and Ser-235 together coordinate Mg(2+). Lys-238 contributes to the substrate binding site. Glu-239 serves as a coordination point for Mg(2+). Residue 317-318 (RY) participates in substrate binding.

This sequence belongs to the terpene synthase family. It depends on Mg(2+) as a cofactor.

It carries out the reaction (2E,6E)-farnesyl diphosphate = (+)-eremophilene + diphosphate. It functions in the pathway secondary metabolite biosynthesis; terpenoid biosynthesis. Its function is as follows. Catalyzes the conversion of (2E,6E)-farnesyl diphosphate (FPP) to yield the bicyclic sesquiterpene eremophilene via a 1,10-cyclization, which requires the abstraction of the pyrophosphate from FPP to yield the (E,E)-germacradienyl cation. The only accepted substrate is farnesyl diphosphate (FPP). This Sorangium cellulosum (strain So ce56) (Polyangium cellulosum (strain So ce56)) protein is (+)-eremophilene synthase.